Reading from the N-terminus, the 447-residue chain is MAQKLWEKSVEVNKDIERFTVGRDREMDLYLAKHDVLGSMAHITMLESIGLLTKEELAQLLTELKDIYASAERGEFVIEEGVEDVHSQVELMLTRRLGDVGKKIHSGRSRNDQVLLDLKLFTRTQIREVAEAVEQLFHVLIRQSERYKNVLMPGYTHLQIAMPSSFGLWFGAYAESLVDDMLFLQAAFKMCNKNPLGSAAGYGSSFPLNRTMTTELLGFDSLNYNVVYAQMGRGKMERNVAFALATLAGTISKLAFDACIFNSQNFGFVKLPDECTTGSSIMPHKKNPDVFELTRAKCNKLQSLPQQIMMIANNLPSGYFRDLQIIKEVFLPAFQELKDCLQMTTYIMNEIKVNEHILDDDKYLFIFSVEEVNRLAREGMPFRDAYKKVGLDIEAGHFSHDKQVHHTHEGSIGNLCNDEISALMQRTIEGFNFQGMEQAEKTLLGRK.

This sequence belongs to the lyase 1 family. Argininosuccinate lyase subfamily.

Its subcellular location is the cytoplasm. It catalyses the reaction 2-(N(omega)-L-arginino)succinate = fumarate + L-arginine. It functions in the pathway amino-acid biosynthesis; L-arginine biosynthesis; L-arginine from L-ornithine and carbamoyl phosphate: step 3/3. In Bacteroides fragilis (strain ATCC 25285 / DSM 2151 / CCUG 4856 / JCM 11019 / LMG 10263 / NCTC 9343 / Onslow / VPI 2553 / EN-2), this protein is Argininosuccinate lyase.